The chain runs to 201 residues: Elongation factor Ts (201 aa).

The tract at residues 81-84 (TDFV) is involved in Mg(2+) ion dislocation from EF-Tu.

Belongs to the EF-Ts family.

It localises to the cytoplasm. Its function is as follows. Associates with the EF-Tu.GDP complex and induces the exchange of GDP to GTP. It remains bound to the aminoacyl-tRNA.EF-Tu.GTP complex up to the GTP hydrolysis stage on the ribosome. This is Elongation factor Ts from Syntrophus aciditrophicus (strain SB).